Reading from the N-terminus, the 277-residue chain is Inhibition of morphological differentiation protein (277 aa).

D18, D20, and D192 together coordinate Mg(2+).

Belongs to the HAD-like hydrolase superfamily. SerB family.

In Streptomyces azureus, this protein is Inhibition of morphological differentiation protein.